Consider the following 309-residue polypeptide: Foldase protein PrsA (309 aa).

The N-terminal stretch at 1 to 20 is a signal peptide; the sequence is MKKKIVAGAVTLLSVAVLAA. C21 is lipidated: N-palmitoyl cysteine. C21 is lipidated: S-diacylglycerol cysteine. The PpiC domain maps to 144–241; that stretch reads TPEVTAQIIK…ASYYIVKLVS (98 aa).

The protein belongs to the PrsA family.

The protein localises to the cell membrane. The enzyme catalyses [protein]-peptidylproline (omega=180) = [protein]-peptidylproline (omega=0). Functionally, plays a major role in protein secretion by helping the post-translocational extracellular folding of several secreted proteins. The protein is Foldase protein PrsA of Streptococcus gordonii (strain Challis / ATCC 35105 / BCRC 15272 / CH1 / DL1 / V288).